A 418-amino-acid polypeptide reads, in one-letter code: E3 ubiquitin-protein ligase makorin-2 (418 aa).

2 C3H1-type zinc fingers span residues asparagine 2–alanine 29 and serine 31–proline 58. Residues glutamate 76–glutamate 100 are disordered. A C3H1-type 3 zinc finger spans residues aspartate 164–valine 191. A makorin-type Cys-His region spans residues cysteine 192–arginine 221. An RING-type zinc finger spans residues cysteine 237–arginine 291. A C3H1-type 4 zinc finger spans residues glycine 320 to proline 349.

It localises to the cytoplasm. The protein localises to the nucleus. It catalyses the reaction S-ubiquitinyl-[E2 ubiquitin-conjugating enzyme]-L-cysteine + [acceptor protein]-L-lysine = [E2 ubiquitin-conjugating enzyme]-L-cysteine + N(6)-ubiquitinyl-[acceptor protein]-L-lysine.. The protein operates within protein modification; protein ubiquitination. E3 ubiquitin ligase catalyzing the covalent attachment of ubiquitin moieties onto substrate proteins. Inhibits neurogenesis and axis formation during embryonic development by modulating the phosphatidylinositol 3-kinase (PI3K) pathway. Acts downstream of PI3K and akt1 to up-regulate gsk3b mRNA expression. In Xenopus tropicalis (Western clawed frog), this protein is E3 ubiquitin-protein ligase makorin-2 (mkrn2).